The sequence spans 349 residues: Acyl-CoA Delta(11) desaturase (349 aa).

The next 2 helical transmembrane spans lie at 41–61 and 66–86; these read FLTF…CFTS and TLLF…AGAH. The short motif at 86–91 is the Histidine box-1 element; that stretch reads HRLWTH. A Histidine box-2 motif is present at residues 123–127; the sequence is HRLHH. The helical transmembrane segment at 184–204 threads the bilayer; that stretch reads AVPLIGTVCFALPTLIPVYCW. The Histidine box-3 signature appears at 263–267; the sequence is HNYHH. The chain crosses the membrane as a helical span at residues 282–302; sequence FLNLTTLFIDFCAWFGWAYDL.

Belongs to the fatty acid desaturase type 1 family. It depends on Fe cation as a cofactor. Adult female pheromone gland. Increases by two or three orders of magnitude during the first 2 days after adult eclosion.

It is found in the endoplasmic reticulum membrane. It catalyses the reaction an 11,12-saturated fatty acyl-CoA + 2 Fe(II)-[cytochrome b5] + O2 + 2 H(+) = an (11Z)-Delta(11)-fatty acyl-CoA + 2 Fe(III)-[cytochrome b5] + 2 H2O. Functionally, catalyzes the formation of Delta(11) fatty acyl precursors in the pheromone gland. This is Acyl-CoA Delta(11) desaturase (D11DS) from Trichoplusia ni (Cabbage looper).